A 294-amino-acid polypeptide reads, in one-letter code: MSHKRMFTRLAAATSAAVLAGITLTACGDSEGGDGLLAAIENGNVTIGTKYDQPGLGLRNPDNSMSGLDVDVAQYVVNSIADDNGWDHPTVEWRETPSAQRETLIQNGEVDMIAATYSINPGRSESVNFGGPYLLTHQALLVREDDDRIQTLEDLDDGLILCSVTGSTPAQKVKDVLPGVQLQEYDTYSSCVEALSQGNVDAMTTDATILFGYAQQREGEFRVVEMEQDGEPFTNEYYGIGITKDDTEATDAINAALERMYADGSFQRFLTENLGEDSQVVQEGTPGDLSFLDE.

The N-terminal stretch at 1 to 26 is a signal peptide; that stretch reads MSHKRMFTRLAAATSAAVLAGITLTA. The N-palmitoyl cysteine moiety is linked to residue Cys-27. Cys-27 carries S-diacylglycerol cysteine lipidation.

It belongs to the bacterial solute-binding protein 3 family. The complex is composed of two ATP-binding proteins (GluA), two transmembrane proteins (GluC and GluD) and a solute-binding protein (GluB).

The protein resides in the cell membrane. In terms of biological role, part of the ABC transporter complex GluABCD involved in glutamate uptake. Binds glutamate with a high affinity. In Corynebacterium efficiens (strain DSM 44549 / YS-314 / AJ 12310 / JCM 11189 / NBRC 100395), this protein is Glutamate-binding protein GluB.